A 603-amino-acid polypeptide reads, in one-letter code: Probable methyltransferase PMT20 (603 aa).

The Cytoplasmic segment spans residues 1–16 (MKSGKQSSQPEKGTSR). Residues 17-37 (ILSLTVLFIAFCGFSFYLGGI) form a helical; Signal-anchor for type II membrane protein membrane-spanning segment. Residues 38 to 603 (FCSERDKIVA…KLWFSSNQTS (566 aa)) are Lumenal-facing. N313 and N600 each carry an N-linked (GlcNAc...) asparagine glycan.

Belongs to the methyltransferase superfamily.

It localises to the golgi apparatus membrane. In Arabidopsis thaliana (Mouse-ear cress), this protein is Probable methyltransferase PMT20.